The following is a 226-amino-acid chain: uncharacterized protein (226 aa).

4 helical membrane-spanning segments follow: residues 25–45, 54–74, 107–127, and 153–173; these read ALAWLCDVFLLAIVLVVIFLI, FLLFLVLSCSQTILWTVYFIF, ELFLWILLSVLFLVIASYFFI, and TITILISFLQLIFIGYFCFSS.

The protein localises to the cell membrane. This is an uncharacterized protein from Mycoplasma genitalium (strain ATCC 33530 / DSM 19775 / NCTC 10195 / G37) (Mycoplasmoides genitalium).